The chain runs to 446 residues: Maltoporin (446 aa).

The first 25 residues, 1 to 25 (MMITLRKLPLAVAVAAGVMSAQAMA), serve as a signal peptide directing secretion.

It belongs to the porin LamB (TC 1.B.3) family. Homotrimer formed of three 18-stranded antiparallel beta-barrels, containing three independent channels.

Its subcellular location is the cell outer membrane. It catalyses the reaction beta-maltose(in) = beta-maltose(out). Functionally, involved in the transport of maltose and maltodextrins. The protein is Maltoporin of Escherichia coli (strain SE11).